Here is a 470-residue protein sequence, read N- to C-terminus: Ribulose bisphosphate carboxylase large chain (470 aa).

Positions 115 and 165 each coordinate substrate. The active-site Proton acceptor is the Lys-167. Lys-169 provides a ligand contact to substrate. 3 residues coordinate Mg(2+): Lys-193, Asp-195, and Glu-196. Residue Lys-193 is modified to N6-carboxylysine. The active-site Proton acceptor is the His-286. The substrate site is built by Arg-287, His-319, and Ser-371.

The protein belongs to the RuBisCO large chain family. Type I subfamily. As to quaternary structure, heterohexadecamer of 8 large chains and 8 small chains. Mg(2+) serves as cofactor.

The protein resides in the carboxysome. It catalyses the reaction 2 (2R)-3-phosphoglycerate + 2 H(+) = D-ribulose 1,5-bisphosphate + CO2 + H2O. It carries out the reaction D-ribulose 1,5-bisphosphate + O2 = 2-phosphoglycolate + (2R)-3-phosphoglycerate + 2 H(+). In terms of biological role, ruBisCO catalyzes two reactions: the carboxylation of D-ribulose 1,5-bisphosphate, the primary event in carbon dioxide fixation, as well as the oxidative fragmentation of the pentose substrate in the photorespiration process. Both reactions occur simultaneously and in competition at the same active site. The chain is Ribulose bisphosphate carboxylase large chain from Prochlorococcus marinus (strain SARG / CCMP1375 / SS120).